The primary structure comprises 506 residues: Ribose import ATP-binding protein RbsA (506 aa).

ABC transporter domains are found at residues 5-241 and 254-498; these read LALT…VGRR and RDAA…TSDV. ATP is bound at residue 37–44; that stretch reads GENGAGKS.

Belongs to the ABC transporter superfamily. Ribose importer (TC 3.A.1.2.1) family. In terms of assembly, the complex is composed of an ATP-binding protein (RbsA), two transmembrane proteins (RbsC) and a solute-binding protein (RbsB).

Its subcellular location is the cell inner membrane. The enzyme catalyses D-ribose(out) + ATP + H2O = D-ribose(in) + ADP + phosphate + H(+). Its function is as follows. Part of the ABC transporter complex RbsABC involved in ribose import. Responsible for energy coupling to the transport system. This is Ribose import ATP-binding protein RbsA from Burkholderia mallei (strain ATCC 23344).